Consider the following 317-residue polypeptide: Large ribosomal subunit protein uL10 (317 aa).

Residues 286–317 (AGAGAAAEKKEEAKKEESESEEDDDMGFGLFD) are disordered. The span at 292 to 302 (AEKKEEAKKEE) shows a compositional bias: basic and acidic residues.

Belongs to the universal ribosomal protein uL10 family. In terms of assembly, P0 forms a pentameric complex by interaction with dimers of P1 and P2. Post-translationally, phosphorylated.

Functionally, ribosomal protein P0 is the functional equivalent of E.coli protein L10. The polypeptide is Large ribosomal subunit protein uL10 (RpLP0) (Ceratitis capitata (Mediterranean fruit fly)).